A 123-amino-acid polypeptide reads, in one-letter code: Large ribosomal subunit protein uL14 (123 aa).

This sequence belongs to the universal ribosomal protein uL14 family. As to quaternary structure, part of the 50S ribosomal subunit. Forms a cluster with proteins L3 and L19. In the 70S ribosome, L14 and L19 interact and together make contacts with the 16S rRNA in bridges B5 and B8.

Functionally, binds to 23S rRNA. Forms part of two intersubunit bridges in the 70S ribosome. This Zymomonas mobilis subsp. mobilis (strain ATCC 31821 / ZM4 / CP4) protein is Large ribosomal subunit protein uL14.